A 178-amino-acid polypeptide reads, in one-letter code: Endoribonuclease YbeY (178 aa).

Residues H118, H122, and H128 each contribute to the Zn(2+) site. Positions 158–178 (ADRQSEKDRRLLDKSRYFDEP) are disordered.

The protein belongs to the endoribonuclease YbeY family. It depends on Zn(2+) as a cofactor.

It is found in the cytoplasm. Functionally, single strand-specific metallo-endoribonuclease involved in late-stage 70S ribosome quality control and in maturation of the 3' terminus of the 16S rRNA. In Mycolicibacterium smegmatis (strain ATCC 700084 / mc(2)155) (Mycobacterium smegmatis), this protein is Endoribonuclease YbeY.